Consider the following 312-residue polypeptide: Zinc import ATP-binding protein ZnuC (312 aa).

Positions 13–228 constitute an ABC transporter domain; that stretch reads VSLEDVGVLR…PEYVRLFGSR (216 aa). 45–52 serves as a coordination point for ATP; the sequence is GPNGSGKS. A disordered region spans residues 241–312; it reads DHTHLPDGRV…HSRSGEGRHA (72 aa). Residues 243 to 312 show a composition bias toward basic and acidic residues; it reads THLPDGRVLH…HSRSGEGRHA (70 aa).

Belongs to the ABC transporter superfamily. Zinc importer (TC 3.A.1.15.5) family. In terms of assembly, the complex is composed of two ATP-binding proteins (ZnuC), two transmembrane proteins (ZnuB) and a solute-binding protein (ZnuA).

The protein resides in the cell inner membrane. The catalysed reaction is Zn(2+)(out) + ATP(in) + H2O(in) = Zn(2+)(in) + ADP(in) + phosphate(in) + H(+)(in). Functionally, part of the ABC transporter complex ZnuABC involved in zinc import. Responsible for energy coupling to the transport system. This Rhizobium etli (strain ATCC 51251 / DSM 11541 / JCM 21823 / NBRC 15573 / CFN 42) protein is Zinc import ATP-binding protein ZnuC.